A 446-amino-acid polypeptide reads, in one-letter code: Methionine aminopeptidase 2 (446 aa).

A disordered region spans residues 1–91 (MAAQVTDALK…PPRVLLSNLF (91 aa)). The segment covering 36-48 (EAEDSDDEEEEPV) has biased composition (acidic residues). Basic residues predominate over residues 59–72 (KKKRKRKKKPKKKA). Residue histidine 199 coordinates substrate. A divalent metal cation is bound by residues aspartate 219, aspartate 230, and histidine 299. Histidine 307 contacts substrate. Positions 332 and 427 each coordinate a divalent metal cation.

The protein belongs to the peptidase M24A family. Methionine aminopeptidase eukaryotic type 2 subfamily. Co(2+) serves as cofactor. Requires Zn(2+) as cofactor. Mn(2+) is required as a cofactor. It depends on Fe(2+) as a cofactor.

Its subcellular location is the cytoplasm. The enzyme catalyses Release of N-terminal amino acids, preferentially methionine, from peptides and arylamides.. In terms of biological role, cotranslationally removes the N-terminal methionine from nascent proteins. The N-terminal methionine is often cleaved when the second residue in the primary sequence is small and uncharged (Met-Ala-, Cys, Gly, Pro, Ser, Thr, or Val). The chain is Methionine aminopeptidase 2 from Sclerotinia sclerotiorum (strain ATCC 18683 / 1980 / Ss-1) (White mold).